We begin with the raw amino-acid sequence, 140 residues long: Neurotrophin-7 (140 aa).

A propeptide spanning residues 1 to 7 is cleaved from the precursor; the sequence is PGPRVRR. 3 cysteine pairs are disulfide-bonded: C21-C101, C64-C129, and C89-C131.

The protein belongs to the NGF-beta family.

It localises to the secreted. This Cyprinus carpio (Common carp) protein is Neurotrophin-7 (ntf7).